The chain runs to 149 residues: UPAR/Ly6 domain-containing protein bou (149 aa).

The N-terminal stretch at 1–31 is a signal peptide; the sequence is MWPPKHAHIGWLSSLALVVLLMSLQMVMVSG. Residues 32–126 are Extracellular-facing; the sequence is IECYVCDTSD…YTCDTDGCNA (95 aa). 5 disulfides stabilise this stretch: Cys34/Cys74, Cys37/Cys48, Cys65/Cys91, Cys100/Cys115, and Cys119/Cys124. Asn64 carries N-linked (GlcNAc...) asparagine glycosylation. A lipid anchor (GPI-anchor amidated asparagine) is attached at Asn125. A propeptide spans 126–149 (removed in mature form); that stretch reads AAGRLELEWGVAAALLTLTWLLRH. A helical membrane pass occupies residues 127-147; it reads AGRLELEWGVAAALLTLTWLL. The Cytoplasmic segment spans residues 148-149; that stretch reads RH.

In terms of processing, GPI-anchored.

It localises to the cell membrane. The protein resides in the cell junction. Its subcellular location is the septate junction. The protein localises to the cytoplasm. It is found in the cell cortex. It localises to the secreted. The protein resides in the apicolateral cell membrane. Functionally, involved in tracheal paracellular barrier functions mediated by epithelial cell septate junctions. Involved in paracellular barrier functions mediated by glial cell septate junctions in the peripheral nervous system, including the chordotonal organs, but not the hemolymph-brain barrier (the insect blood-brain barrier) of the central nervous system. Required for septate junction assembly, possibly by organizing the preassembly and transport of septate junction proteins such as dlg1/disks large 1, Nrx-IV/Neurexin-IV and the claudin protein kune. Involved in chitin fiber organization during tracheal development. Secreted, possibly in association with extracellular vesicles, to act non-autonomously on tissues distant from its site of expression. In Drosophila melanogaster (Fruit fly), this protein is UPAR/Ly6 domain-containing protein bou.